Reading from the N-terminus, the 478-residue chain is Cell division protein FtsZ homolog 2-1, chloroplastic (478 aa).

The interval 86-112 is disordered; it reads EGTSTIVNPRKETSSGPVVEDFEEPSA. 128 to 132 is a binding site for GTP; that stretch reads GGGSN. Position 143 is a phosphoserine; by PGK1 (Ser-143). GTP-binding positions include 217–219, Glu-248, and Arg-252; that span reads GTG. The residue at position 286 (Thr-286) is a Phosphothreonine; by PGK1. Asp-296 is a binding site for GTP.

Belongs to the FtsZ family. In terms of assembly, aggregates to form a contractile ring-like structure; contraction of the ring was accompanied by an increase in the filament turnover rate. Self-interacts and binds to FTSZ1 in heteromers to form two morphologically distinct types of filaments, termed type-I (smooth filaments) and -II (rough filaments), in a GTP-dependent manner; the GDP-induced disassembly is inhibited by ARC6. Interacts (via C-terminus) with ARC6; this interaction enables ARC3 binding to FTSZ2. Part of a complex made of ARC3, ARC6, FTSZ1 and FTSZ2. Binds to MCD1 in an ARC6-dependent manner. Binds to CDP1/PARC6. Part of a complex made of CDP1/PARC6, ARC3 and FtsZ proteins in the middle of the plastid; this complex enhances the dynamics of Z rings during chloroplast division. Binds to PGK1. Post-translationally, filaments containing FTSZ2-1 are stabilized when in complex with GTP but destabilized after conversion of GTP into GDP; ARC6 conteracts this destabilisation by preventing the dissociation of GDP-bound FTSZ2 molecules thus inhibiting filament disassembly whereas ARC3 promotes GTPase activity thus accelerating the conversion of GTP into GDP and triggering FtsZ2 filaments disassembly. In terms of processing, phosphorylation at Ser-143 is necessary for interactions with ARC3, ARC6, FTSZ1 and FTSZ2-2. Phosphorylations at Ser-143 and Thr-286 are required for the formation of contractile ring at the chloroplast midpoint.

It is found in the plastid. The protein resides in the chloroplast stroma. The protein localises to the chloroplast thylakoid membrane. With respect to regulation, GTPase activity is enhanced by ARC3. Its function is as follows. Exhibits GTPase activity which converts GTP ligands to GDP. Component of the plastid division machinery consisting in a binary fission accomplished by the simultaneous constriction of the FtsZ ring on the stromal side of the inner envelope membrane, and the ARC5 ring on the cytosolic side of the outer envelope membrane. Required for plastid division in a dose-dependent manner. In the vegetative shoot apex, at the shoot apical meristem (SAM), where the proplastid-to-chloroplast transition takes place, major contributor of plastid division in the L1 and L3 layers and contributes equally with FTSZ1 in the L2 layer. The chain is Cell division protein FtsZ homolog 2-1, chloroplastic from Arabidopsis thaliana (Mouse-ear cress).